The primary structure comprises 362 residues: Peptide chain release factor 1 (362 aa).

At Q236 the chain carries N5-methylglutamine.

It belongs to the prokaryotic/mitochondrial release factor family. Post-translationally, methylated by PrmC. Methylation increases the termination efficiency of RF1.

The protein localises to the cytoplasm. Its function is as follows. Peptide chain release factor 1 directs the termination of translation in response to the peptide chain termination codons UAG and UAA. This chain is Peptide chain release factor 1, found in Lactobacillus gasseri (strain ATCC 33323 / DSM 20243 / BCRC 14619 / CIP 102991 / JCM 1131 / KCTC 3163 / NCIMB 11718 / NCTC 13722 / AM63).